A 305-amino-acid chain; its full sequence is GTP cyclohydrolase FolE2 (305 aa).

This sequence belongs to the GTP cyclohydrolase IV family.

The catalysed reaction is GTP + H2O = 7,8-dihydroneopterin 3'-triphosphate + formate + H(+). Its pathway is cofactor biosynthesis; 7,8-dihydroneopterin triphosphate biosynthesis; 7,8-dihydroneopterin triphosphate from GTP: step 1/1. Converts GTP to 7,8-dihydroneopterin triphosphate. In Xanthomonas euvesicatoria pv. vesicatoria (strain 85-10) (Xanthomonas campestris pv. vesicatoria), this protein is GTP cyclohydrolase FolE2.